We begin with the raw amino-acid sequence, 516 residues long: tRNA-guanine(15) transglycosylase (516 aa).

The active-site Nucleophile is aspartate 93. The substrate site is built by aspartate 128 and alanine 196. Zn(2+)-binding residues include cysteine 279, cysteine 281, and cysteine 284. A compositionally biased stretch (low complexity) spans 488–502 (LSAVSERLGDEASVG). The disordered stretch occupies residues 488–516 (LSAVSERLGDEASVGGDDGDDGGSASSAE).

The protein belongs to the archaeosine tRNA-ribosyltransferase family. Requires Zn(2+) as cofactor.

It catalyses the reaction guanosine(15) in tRNA + 7-cyano-7-deazaguanine = 7-cyano-7-carbaguanosine(15) in tRNA + guanine. Its pathway is tRNA modification; archaeosine-tRNA biosynthesis. Its function is as follows. Exchanges the guanine residue with 7-cyano-7-deazaguanine (preQ0) at position 15 in the dihydrouridine loop (D-loop) of archaeal tRNAs. The sequence is that of tRNA-guanine(15) transglycosylase from Haloferax volcanii (strain ATCC 29605 / DSM 3757 / JCM 8879 / NBRC 14742 / NCIMB 2012 / VKM B-1768 / DS2) (Halobacterium volcanii).